Consider the following 570-residue polypeptide: MSDSKPRDVQVLPIATNTKVLRARSWSRLRFEIEYALERGTTSNSYVIEGDKTAIIDPPVESFMKIYLEALQQTVNLKKLDYVILGHFSPNRIPTFKALLELAPQITFVCSLPAAGDLRAAFPDDNLNILPMRGKETLDLGKGHVLKFLPIPSPRWPAGLCTYDVQTQILYTDKIFGAHICGDDVFDDNWESFKEDQRYYFNCLMAPHAIHVEAALEKISDLQVRLYAVGHGPLVRTSLIALTQAYADWSKAQKDREISVALLYASAYGNTATIARAIALGLTKGGVAVKSINCEFATPEEIQTNLEQVDGFLIGSPTIGGHAPTPINTALGIVLKVGDNNKLAGVFGSYGWSGEALDMIEGKLRDAGYRFGLDTLKVKFKPDDVTLKFCEEVGTDFAQTLKKAKKVRVPQQAATPVEQAVGRIVGSVCVITAKQGDVSTGMLGSWVSQATFNPPGLTVAIAKERAIESLMYPGGKFALNILSEGNHLEYMKHFRKNFAPGEDRFANFTTTEADNGCTVLADALAYVECSVDQRLECGDHWVVYATVDNGKLLKPDDVTAINHRKTGNHY.

The tract at residues 38–231 is zinc metallo-hydrolase; the sequence is ERGTTSNSYV…LQVRLYAVGH (194 aa). In terms of domain architecture, Flavodoxin-like spans 260-402; the sequence is VALLYASAYG…VGTDFAQTLK (143 aa). The flavodoxin-reductase-like stretch occupies residues 421 to 570; that stretch reads VGRIVGSVCV…INHRKTGNHY (150 aa).

This sequence in the N-terminal section; belongs to the zinc metallo-hydrolase group 3 family. In the C-terminal section; belongs to the flavodoxin reductase family. Fe cation is required as a cofactor.

Mediates electron transfer from NADH to oxygen, reducing it to water. This modular protein has 3 redox cofactors, in other organisms the same activity requires 2 or 3 proteins. This is Putative diflavin flavoprotein A 5 (dfa5) from Nostoc sp. (strain PCC 7120 / SAG 25.82 / UTEX 2576).